The sequence spans 482 residues: Protein trichome birefringence-like 15 (482 aa).

A helical; Signal-anchor for type II membrane protein membrane pass occupies residues 109 to 129 (GSVSLSLIILILLVTTLLVSA). A GDS motif motif is present at residues 217-219 (GDS). The short motif at 461–475 (DCLHWCLPGIPDTWN) is the DCXHWCLPGXXDXWN motif element.

Belongs to the PC-esterase family. TBL subfamily.

Its subcellular location is the membrane. Functionally, may act as a bridging protein that binds pectin and other cell wall polysaccharides. Probably involved in maintaining esterification of pectins. May be involved in the specific O-acetylation of cell wall polymers. The protein is Protein trichome birefringence-like 15 (TBL15) of Arabidopsis thaliana (Mouse-ear cress).